The chain runs to 348 residues: Phospho-N-acetylmuramoyl-pentapeptide-transferase (348 aa).

A run of 10 helical transmembrane segments spans residues 11–31, 67–87, 92–112, 128–148, 163–183, 198–218, 222–242, 251–271, 276–296, and 326–346; these read SLIL…IFLG, TAGG…LLPL, TWLF…DDIV, FIVQ…IDKE, IFLG…MLAI, GLAT…AIMS, PLAY…LAFL, VFMG…CAVM, LFLI…ILQV, and VVAR…VAAL.

It belongs to the glycosyltransferase 4 family. MraY subfamily. It depends on Mg(2+) as a cofactor.

Its subcellular location is the cell inner membrane. The catalysed reaction is UDP-N-acetyl-alpha-D-muramoyl-L-alanyl-gamma-D-glutamyl-meso-2,6-diaminopimeloyl-D-alanyl-D-alanine + di-trans,octa-cis-undecaprenyl phosphate = di-trans,octa-cis-undecaprenyl diphospho-N-acetyl-alpha-D-muramoyl-L-alanyl-D-glutamyl-meso-2,6-diaminopimeloyl-D-alanyl-D-alanine + UMP. The protein operates within cell wall biogenesis; peptidoglycan biosynthesis. Its function is as follows. Catalyzes the initial step of the lipid cycle reactions in the biosynthesis of the cell wall peptidoglycan: transfers peptidoglycan precursor phospho-MurNAc-pentapeptide from UDP-MurNAc-pentapeptide onto the lipid carrier undecaprenyl phosphate, yielding undecaprenyl-pyrophosphoryl-MurNAc-pentapeptide, known as lipid I. This is Phospho-N-acetylmuramoyl-pentapeptide-transferase from Chlamydia felis (strain Fe/C-56) (Chlamydophila felis).